A 104-amino-acid polypeptide reads, in one-letter code: uncharacterized protein (104 aa).

This is an uncharacterized protein from Methanocaldococcus jannaschii (strain ATCC 43067 / DSM 2661 / JAL-1 / JCM 10045 / NBRC 100440) (Methanococcus jannaschii).